Consider the following 95-residue polypeptide: Aspartyl/glutamyl-tRNA(Asn/Gln) amidotransferase subunit C (95 aa).

Belongs to the GatC family. As to quaternary structure, heterotrimer of A, B and C subunits.

The catalysed reaction is L-glutamyl-tRNA(Gln) + L-glutamine + ATP + H2O = L-glutaminyl-tRNA(Gln) + L-glutamate + ADP + phosphate + H(+). It catalyses the reaction L-aspartyl-tRNA(Asn) + L-glutamine + ATP + H2O = L-asparaginyl-tRNA(Asn) + L-glutamate + ADP + phosphate + 2 H(+). In terms of biological role, allows the formation of correctly charged Asn-tRNA(Asn) or Gln-tRNA(Gln) through the transamidation of misacylated Asp-tRNA(Asn) or Glu-tRNA(Gln) in organisms which lack either or both of asparaginyl-tRNA or glutaminyl-tRNA synthetases. The reaction takes place in the presence of glutamine and ATP through an activated phospho-Asp-tRNA(Asn) or phospho-Glu-tRNA(Gln). The sequence is that of Aspartyl/glutamyl-tRNA(Asn/Gln) amidotransferase subunit C from Brucella anthropi (strain ATCC 49188 / DSM 6882 / CCUG 24695 / JCM 21032 / LMG 3331 / NBRC 15819 / NCTC 12168 / Alc 37) (Ochrobactrum anthropi).